Reading from the N-terminus, the 509-residue chain is DEAD-box ATP-dependent RNA helicase CshA (509 aa).

The short motif at 2–30 (QNFKELGISDKTVQTLEAMGFKEPTPIQK) is the Q motif element. The Helicase ATP-binding domain maps to 33-203 (IPYALEGDDI…QQFMKAPKII (171 aa)). 46-53 (AQTGTGKT) is a binding site for ATP. A DEAD box motif is present at residues 150–153 (DEAD). One can recognise a Helicase C-terminal domain in the interval 214-375 (QIDEYYTIVK…LRPPHRKEVL (162 aa)). Basic residues-rich tracts occupy residues 440 to 459 (ARKNRSSKGGSRRSNHKRGN) and 467 to 482 (RRSKGSKGQSSKKKNQ). The segment at 440–509 (ARKNRSSKGG…KGRTFADHQK (70 aa)) is disordered. Over residues 483 to 492 (KKFDRRDKQQ) the composition is skewed to basic and acidic residues.

The protein belongs to the DEAD box helicase family. CshA subfamily. Oligomerizes, may be a member of the RNA degradosome.

Its subcellular location is the cytoplasm. The enzyme catalyses ATP + H2O = ADP + phosphate + H(+). Functionally, DEAD-box RNA helicase possibly involved in RNA degradation. Unwinds dsRNA in both 5'- and 3'-directions, has RNA-dependent ATPase activity. The polypeptide is DEAD-box ATP-dependent RNA helicase CshA (Staphylococcus epidermidis (strain ATCC 12228 / FDA PCI 1200)).